The sequence spans 143 residues: Transcriptional regulator MraZ (143 aa).

SpoVT-AbrB domains lie at 5–47 and 76–119; these read THTP…PRAE and TDEQ…DAQA.

This sequence belongs to the MraZ family. As to quaternary structure, forms oligomers.

It is found in the cytoplasm. It localises to the nucleoid. The sequence is that of Transcriptional regulator MraZ from Mycobacterium leprae (strain Br4923).